The sequence spans 809 residues: Chorion peroxidase (809 aa).

A signal peptide spans 1 to 21; that stretch reads MSRILFILLLLIVTQLSELQA. Positions 22–223 are excised as a propeptide; that stretch reads AAFSVRQNRF…KFTETPLAHH (202 aa). Positions 36–55 are disordered; the sequence is DLQTPAPLATSTESSKKPEK. Residue Asn-110 is glycosylated (N-linked (GlcNAc...) asparagine). Cys-224 carries the post-translational modification N-acetylcysteine; in Chorion peroxidase light chain. Cysteines 230 and 244 form a disulfide. The active-site Proton acceptor is His-320. Cys-448 and Cys-457 form a disulfide bridge. His-568 lines the heme b pocket. Cys-765 and Cys-794 are disulfide-bonded.

It belongs to the peroxidase family. XPO subfamily. As to quaternary structure, heterodimer. Heme b is required as a cofactor. Expressed at low levels in the germarium and early follicles. Expression becomes progressively stronger during vitellogenesis, and is highly expressed in germ cells and somatic cells. A subset of follicle cells, termed border cells (BC), exhibit a high level of expression.

The protein localises to the secreted. It carries out the reaction 2 a phenolic donor + H2O2 = 2 a phenolic radical donor + 2 H2O. Functionally, required for ovarian follicle maturation. Involved in the formation of a rigid and insoluble egg chorion by catalyzing chorion protein cross-linking through dityrosine formation and phenol oxidase-catalyzed chorion melanization. The chain is Chorion peroxidase (Pxt) from Drosophila melanogaster (Fruit fly).